Reading from the N-terminus, the 451-residue chain is Histidinol dehydrogenase (451 aa).

The disordered stretch occupies residues 1–20; the sequence is MLNVTDLRGHTPSKSDIRRA. Residues 7-19 are compositionally biased toward basic and acidic residues; it reads LRGHTPSKSDIRR. Residues Tyr129, Gln193, and Asn218 each contribute to the NAD(+) site. Substrate contacts are provided by Thr241, Gln263, and His266. 2 residues coordinate Zn(2+): Gln263 and His266. Active-site proton acceptor residues include Glu332 and His333. His333, Asp366, Glu420, and His425 together coordinate substrate. Asp366 contributes to the Zn(2+) binding site. His425 serves as a coordination point for Zn(2+).

This sequence belongs to the histidinol dehydrogenase family. Requires Zn(2+) as cofactor.

The catalysed reaction is L-histidinol + 2 NAD(+) + H2O = L-histidine + 2 NADH + 3 H(+). The protein operates within amino-acid biosynthesis; L-histidine biosynthesis; L-histidine from 5-phospho-alpha-D-ribose 1-diphosphate: step 9/9. Catalyzes the sequential NAD-dependent oxidations of L-histidinol to L-histidinaldehyde and then to L-histidine. The polypeptide is Histidinol dehydrogenase (Corynebacterium efficiens (strain DSM 44549 / YS-314 / AJ 12310 / JCM 11189 / NBRC 100395)).